A 122-amino-acid polypeptide reads, in one-letter code: Large ribosomal subunit protein uL14 (122 aa).

Belongs to the universal ribosomal protein uL14 family. Part of the 50S ribosomal subunit. Forms a cluster with proteins L3 and L19. In the 70S ribosome, L14 and L19 interact and together make contacts with the 16S rRNA in bridges B5 and B8.

In terms of biological role, binds to 23S rRNA. Forms part of two intersubunit bridges in the 70S ribosome. This Bradyrhizobium sp. (strain BTAi1 / ATCC BAA-1182) protein is Large ribosomal subunit protein uL14.